The chain runs to 1023 residues: StAR-related lipid transfer protein 8 (1023 aa).

2 disordered regions span residues 46-67 (PMGSSDLLAPPSPGLPATSSCE) and 82-161 (TVSL…KVSK). Residues 99–114 (PSSSDRPLLSPTQGQE) show a composition bias toward polar residues. Position 108 is a phosphoserine (Ser-108). Residues 120 to 130 (AKKRHRNRSFL) show a composition bias toward basic residues. The span at 143-161 (GSQQAEPKHSPATSEKVSK) shows a compositional bias: polar residues. Arg-169 is modified (asymmetric dimethylarginine). 2 positions are modified to phosphoserine: Ser-235 and Ser-238. Low complexity predominate over residues 387–397 (PAQAPAEAEPV). Disordered regions lie at residues 387–461 (PAQA…MNEA) and 467–486 (LAGLQASMPRERRDSGVGAS). The segment covering 441 to 459 (ISDTVASSSELDSSGNSMN) has biased composition (polar residues). Phosphoserine occurs at positions 498 and 506. The region spanning 573–777 (PPLIHVQRTG…HMISDCKKLF (205 aa)) is the Rho-GAP domain. Positions 733-757 (KKDSPSPRIKSKRSLIGRPGPRDLS) are disordered. The START domain maps to 809 to 1017 (AQAAGVSLSL…RDSFPTLQAA (209 aa)).

In terms of assembly, binds both the SH2 and PTB domains of TNS1. In terms of tissue distribution, widely expressed with highest levels in kidney, lung and placenta.

Its subcellular location is the cell junction. It localises to the focal adhesion. Its function is as follows. Accelerates GTPase activity of RHOA and CDC42, but not RAC1. Stimulates the hydrolysis of phosphatidylinositol 4,5-bisphosphate by PLCD1. This Homo sapiens (Human) protein is StAR-related lipid transfer protein 8 (STARD8).